The sequence spans 175 residues: Ribosome maturation factor RimM (175 aa).

A PRC barrel domain is found at 99 to 172; sequence SIEFTWEHFI…KLTMIIPDGL (74 aa).

Belongs to the RimM family. In terms of assembly, binds ribosomal protein uS19.

The protein resides in the cytoplasm. Functionally, an accessory protein needed during the final step in the assembly of 30S ribosomal subunit, possibly for assembly of the head region. Essential for efficient processing of 16S rRNA. May be needed both before and after RbfA during the maturation of 16S rRNA. It has affinity for free ribosomal 30S subunits but not for 70S ribosomes. This is Ribosome maturation factor RimM from Porphyromonas gingivalis (strain ATCC BAA-308 / W83).